Here is a 185-residue protein sequence, read N- to C-terminus: Ubiquitin-fold modifier-conjugating enzyme 1 (185 aa).

Cysteine 119 serves as the catalytic Glycyl thioester intermediate.

This sequence belongs to the ubiquitin-conjugating enzyme family. UFC1 subfamily.

Functionally, E2-like enzyme which forms an intermediate with UFM1 via a thioester linkage. The polypeptide is Ubiquitin-fold modifier-conjugating enzyme 1 (Oryza sativa subsp. japonica (Rice)).